A 336-amino-acid chain; its full sequence is Putative transcription factor avaE (336 aa).

A DNA-binding region (WRKY) is located at residues 32 to 100 (TATRLNQTTF…VPLDQNESMP (69 aa)).

The protein localises to the nucleus. The protein operates within secondary metabolite biosynthesis. In terms of biological role, putative transcription factor; part of the cluster that mediates the biosynthesis of a highly modified cyclo-arginine-tryptophan dipeptide (cRW). In Aspergillus versicolor, this protein is Putative transcription factor avaE.